We begin with the raw amino-acid sequence, 79 residues long: Tungsten-containing formylmethanofuran dehydrogenase 2 subunit G (79 aa).

2 4Fe-4S ferredoxin-type domains span residues 2–31 (VKIV…SPNV) and 51–79 (TVSV…EIKT). Positions 11, 14, 17, 21, 60, 63, 66, and 70 each coordinate [4Fe-4S] cluster.

The cofactor is [4Fe-4S] cluster.

It catalyses the reaction N-formylmethanofuran + 2 oxidized [2Fe-2S]-[ferredoxin] + H2O = methanofuran + 2 reduced [2Fe-2S]-[ferredoxin] + CO2 + H(+). It functions in the pathway one-carbon metabolism; methanogenesis from CO(2); 5,10-methenyl-5,6,7,8-tetrahydromethanopterin from CO(2): step 1/3. With respect to regulation, not inactivated by cyanide. Functionally, catalyzes the reversible oxidation of CO(2) and methanofuran (MFR) to N-formylmethanofuran (CHO-MFR). This enzyme is oxygen-labile. May function as an electron transfer protein. This is Tungsten-containing formylmethanofuran dehydrogenase 2 subunit G (fwdG) from Methanopyrus kandleri (strain AV19 / DSM 6324 / JCM 9639 / NBRC 100938).